Reading from the N-terminus, the 201-residue chain is Dephospho-CoA kinase (201 aa).

A DPCK domain is found at 4-201; the sequence is SVGLTGNIAS…KYLREAKIKQ (198 aa). 12 to 17 lines the ATP pocket; sequence ASGKST.

The protein belongs to the CoaE family.

The protein resides in the cytoplasm. The catalysed reaction is 3'-dephospho-CoA + ATP = ADP + CoA + H(+). Its pathway is cofactor biosynthesis; coenzyme A biosynthesis; CoA from (R)-pantothenate: step 5/5. Functionally, catalyzes the phosphorylation of the 3'-hydroxyl group of dephosphocoenzyme A to form coenzyme A. This chain is Dephospho-CoA kinase, found in Legionella pneumophila (strain Lens).